The chain runs to 939 residues: Isoleucine--tRNA ligase (939 aa).

The 'HIGH' region signature appears at 57–67 (PYANGHIHIGH). Glu563 contributes to the L-isoleucyl-5'-AMP binding site. Positions 604–608 (KMSKS) match the 'KMSKS' region motif. Position 607 (Lys607) interacts with ATP. 4 residues coordinate Zn(2+): Cys903, Cys906, Cys921, and Cys924.

This sequence belongs to the class-I aminoacyl-tRNA synthetase family. IleS type 1 subfamily. In terms of assembly, monomer. The cofactor is Zn(2+).

Its subcellular location is the cytoplasm. It carries out the reaction tRNA(Ile) + L-isoleucine + ATP = L-isoleucyl-tRNA(Ile) + AMP + diphosphate. In terms of biological role, catalyzes the attachment of isoleucine to tRNA(Ile). As IleRS can inadvertently accommodate and process structurally similar amino acids such as valine, to avoid such errors it has two additional distinct tRNA(Ile)-dependent editing activities. One activity is designated as 'pretransfer' editing and involves the hydrolysis of activated Val-AMP. The other activity is designated 'posttransfer' editing and involves deacylation of mischarged Val-tRNA(Ile). The polypeptide is Isoleucine--tRNA ligase (Sulfurihydrogenibium sp. (strain YO3AOP1)).